The following is a 339-amino-acid chain: T-cell surface glycoprotein CD1a (339 aa).

An N-terminal signal peptide occupies residues 1 to 18 (MLFLQLPLLLVLLPGGDS). The Extracellular segment spans residues 19–300 (EEGFQEPISF…IILYWEQHSS (282 aa)). N-linked (GlcNAc...) asparagine glycosylation is found at asparagine 38 and asparagine 75. Position 91–95 (91–95 (FFVRF)) interacts with a D-galactosylceramide. 2 disulfides stabilise this stretch: cysteine 120-cysteine 184 and cysteine 224-cysteine 279. Asparagine 146 carries an N-linked (GlcNAc...) asparagine glycan. Residues 185–295 (PRFVLGLLDA…LGGQDIILYW (111 aa)) enclose the Ig-like domain. A helical membrane pass occupies residues 301–321 (VGWILLAVIVPLVLLTGLAFW). Residues 322 to 339 (HRKHWKHCDPSSALHRLE) lie on the Cytoplasmic side of the membrane.

In terms of assembly, heterodimer with B2M (beta-2-microglobulin). Interacts with CD74.

Its subcellular location is the cell membrane. It localises to the membrane raft. The protein localises to the endosome membrane. Its function is as follows. Antigen-presenting protein that binds self and non-self lipid and glycolipid antigens and presents them to T-cell receptors on natural killer T-cells. The protein is T-cell surface glycoprotein CD1a (CD1A) of Sus scrofa (Pig).